A 210-amino-acid polypeptide reads, in one-letter code: Keratin-associated protein 4-9 (210 aa).

Repeat copies occupy residues 24 to 28 (CCRPS), 29 to 33 (CCETT), 34 to 38 (CCRTT), 39 to 43 (CCRPS), 44 to 48 (CCVSS), 49 to 53 (CCRPQ), 54 to 58 (CCQSV), 59 to 63 (CCQPT), 69 to 73 (CCQTT), 74 to 78 (CCRTT), 84 to 88 (CCVSS), 89 to 93 (CCRPQ), 94 to 98 (CCQPA), 99 to 103 (CCQPT), 104 to 108 (CCRPS), 109 to 113 (CCETT), 114 to 118 (CCHPR), 119 to 123 (CCISS), 124 to 128 (CCRPS), 129 to 133 (CCVSS), 134 to 138 (CCKPQ), 139 to 143 (CCQSV), 144 to 148 (CCQPN), 149 to 153 (CCRPS), 159 to 163 (CCRPS), 164 to 168 (CCESS), 169 to 173 (CCRPC), and 174 to 178 (CCVRP). A 29 X 5 AA repeats of C-C-[RQVHIEK]-[SPTR]-[VSTQCRNP] region spans residues 24–178 (CCRPSCCETT…CCRPCCCVRP (155 aa)).

This sequence belongs to the KRTAP type 4 family. In terms of assembly, interacts with hair keratins. Expressed in the hair follicles.

In terms of biological role, in the hair cortex, hair keratin intermediate filaments are embedded in an interfilamentous matrix, consisting of hair keratin-associated proteins (KRTAP), which are essential for the formation of a rigid and resistant hair shaft through their extensive disulfide bond cross-linking with abundant cysteine residues of hair keratins. The matrix proteins include the high-sulfur and high-glycine-tyrosine keratins. This is Keratin-associated protein 4-9 (KRTAP4-9) from Homo sapiens (Human).